The following is a 132-amino-acid chain: Replication enhancer protein (132 aa).

This sequence belongs to the geminiviridae replication enhancer protein family. In terms of assembly, homooligomer. Interacts with the replication-associated protein (REP). Interacts with host proliferating cell nuclear antigen (PCNA). Interacts with host retinoblastoma-related protein 1 (RBR1), and may thereby deregulate the host cell cycle. Oligomerization and interaction with PCNA are necessary for optimal replication enhancement.

Functionally, increases viral DNA accumulation. Enhances infectivity and symptom expression. This Pepper huasteco yellow vein virus (PHYVV) protein is Replication enhancer protein.